We begin with the raw amino-acid sequence, 447 residues long: Sensor protein VanSB (447 aa).

A run of 2 helical transmembrane segments spans residues 10-30 (VFSY…TLFA) and 137-155 (GIVM…AYIF). The 52-residue stretch at 157–208 (RQMTTPIKALADSANKMANLKEVPPPLERKDELGALAHDMHSMYIRLKETIA) folds into the HAMP domain. The Histidine kinase domain maps to 230-445 (AASHELKTPI…LFWLDLPPTS (216 aa)). Position 233 is a phosphohistidine; by autocatalysis (H233).

It localises to the cell membrane. It carries out the reaction ATP + protein L-histidine = ADP + protein N-phospho-L-histidine.. In terms of biological role, member of the two-component regulatory system VanSB/VanRB. Activates the transcription of vanSB, vanYB and vanW in response to vancomycin which results in vancomycin resistance. VanSB may activate VanRB by phosphorylation. May also act as a phospho-VanRB phosphatase. This is Sensor protein VanSB (vanSB) from Enterococcus faecalis (strain ATCC 700802 / V583).